We begin with the raw amino-acid sequence, 879 residues long: DNA methyltransferase A (879 aa).

This sequence belongs to the methyltransferase superfamily.

The catalysed reaction is a 2'-deoxyadenosine in DNA + S-adenosyl-L-methionine = an N(6)-methyl-2'-deoxyadenosine in DNA + S-adenosyl-L-homocysteine + H(+). Its function is as follows. Recognizes the double-stranded sequence 5'-GACGAG-3' and methylates A-5, yielding m6A. m6A methylation functions as a transcriptional modifier, promoting transcription of a number of genes (at least scpA, hbs, rnhC, yumC and zapA). One studied mechanism is via transcriptional repressor ScoC (also called hpr) which binds to non-methylated scpA promoter; when the m6A target is methylated ScoC no longer binds and scpA transcription is up-regulated. Other mechanisms for gene expression regulation probably exist. Binds DNA with and without the target sequence. Although it resembles a restriction-modification system, it does not have detectable endonuclease activity under tested conditions. A gamma subtype methylase. This chain is DNA methyltransferase A, found in Bacillus subtilis (strain 168).